Here is an 85-residue protein sequence, read N- to C-terminus: U4-theraphotoxin-Hhn1a (85 aa).

A signal peptide spans M1–A22. Positions E23–R48 are excised as a propeptide. 3 cysteine pairs are disulfide-bonded: C52-C66, C56-C77, and C71-C82.

It belongs to the neurotoxin 12 (Hwtx-2) family. 02 (Hwtx-2) subfamily. Monomer. Expressed by the venom gland.

The protein resides in the secreted. Functionally, neurotoxin active on both insects and mammals. This chain is U4-theraphotoxin-Hhn1a, found in Cyriopagopus hainanus (Chinese bird spider).